The primary structure comprises 547 residues: Undecaprenyl phosphate-alpha-4-amino-4-deoxy-L-arabinose arabinosyl transferase (547 aa).

10 consecutive transmembrane segments (helical) span residues 83-103 (FASAAATGLSALLIFWFALQL), 111-131 (FLASLIYLSLLIVYGIGTYSV), 174-194 (FLTKGFIALAVPVVVIVPYVI), 205-225 (FGPLAILSAVLLAAPWAIAVH), 253-273 (APFWYYLPMGLLGTLPWLGLL), 286-306 (ISPETLYLLAWVILPLLFFSI), 311-331 (LLTYILPCFAPLAMLMAANAV), 346-366 (AWLNGLFGLICLVVLAVLAFS), 378-398 (GALAVAMVIFAGWSLLGFIQL), and 408-428 (SALCPMVLAIGLPWALPQSLI).

The protein belongs to the glycosyltransferase 83 family.

It localises to the cell inner membrane. It catalyses the reaction 4-amino-4-deoxy-alpha-L-arabinopyranosyl di-trans,octa-cis-undecaprenyl phosphate + lipid IVA = lipid IIA + di-trans,octa-cis-undecaprenyl phosphate.. It participates in lipopolysaccharide metabolism; 4-amino-4-deoxy-beta-L-arabinose-lipid A biosynthesis. Functionally, catalyzes the transfer of the L-Ara4N moiety of the glycolipid undecaprenyl phosphate-alpha-L-Ara4N to lipid A. The modified arabinose is attached to lipid A and is required for resistance to polymyxin and cationic antimicrobial peptides. The sequence is that of Undecaprenyl phosphate-alpha-4-amino-4-deoxy-L-arabinose arabinosyl transferase from Aeromonas hydrophila subsp. hydrophila (strain ATCC 7966 / DSM 30187 / BCRC 13018 / CCUG 14551 / JCM 1027 / KCTC 2358 / NCIMB 9240 / NCTC 8049).